The primary structure comprises 659 residues: Pheromone-processing carboxypeptidase kex1 (659 aa).

The N-terminal stretch at 1–38 (MAATTTTTNAGRSMASWKRLSTLIAAFTLSWTSSFVAA) is a signal peptide. Topologically, residues 39-527 (AGSADYFVHD…EMAKWEAYRK (489 aa)) are lumenal. Ser190 is an active-site residue. Residues Asn218 and Asn348 are each glycosylated (N-linked (GlcNAc...) asparagine). The active site involves Asp393. Residues Asn444 and Asn452 are each glycosylated (N-linked (GlcNAc...) asparagine). His455 is a catalytic residue. The interval 480-507 (IGGQPTDSRLDGEKLPETTVGGAAGNST) is disordered. N-linked (GlcNAc...) asparagine glycosylation occurs at Asn505. A helical membrane pass occupies residues 528–548 (SGELVLVIVIVAAGVWGWFVW). The Cytoplasmic segment spans residues 549–659 (KERRKTAGQG…SSSRQPGGRS (111 aa)). Residues 565 to 659 (GERHSISNNP…SSSRQPGGRS (95 aa)) form a disordered region. Residues 616–630 (DDLHLSKPEDPHADS) are compositionally biased toward basic and acidic residues. Over residues 649–659 (GSSSRQPGGRS) the composition is skewed to polar residues.

Belongs to the peptidase S10 family.

Its subcellular location is the golgi apparatus. It localises to the trans-Golgi network membrane. The enzyme catalyses Preferential release of a C-terminal arginine or lysine residue.. Its function is as follows. Protease with a carboxypeptidase B-like function involved in the C-terminal processing of the lysine and arginine residues from protein precursors. Promotes cell fusion and is involved in the programmed cell death. This chain is Pheromone-processing carboxypeptidase kex1 (kex1), found in Neurospora crassa (strain ATCC 24698 / 74-OR23-1A / CBS 708.71 / DSM 1257 / FGSC 987).